The following is a 427-amino-acid chain: Glutamyl-tRNA reductase (427 aa).

Residues 48 to 51 (TCNR), Ser-99, 104 to 106 (EDQ), and Gln-110 contribute to the substrate site. Cys-49 (nucleophile) is an active-site residue. An NADP(+)-binding site is contributed by 179 to 184 (GAGEMG).

The protein belongs to the glutamyl-tRNA reductase family. In terms of assembly, homodimer.

The enzyme catalyses (S)-4-amino-5-oxopentanoate + tRNA(Glu) + NADP(+) = L-glutamyl-tRNA(Glu) + NADPH + H(+). The protein operates within porphyrin-containing compound metabolism; protoporphyrin-IX biosynthesis; 5-aminolevulinate from L-glutamyl-tRNA(Glu): step 1/2. Its function is as follows. Catalyzes the NADPH-dependent reduction of glutamyl-tRNA(Glu) to glutamate 1-semialdehyde (GSA). The sequence is that of Glutamyl-tRNA reductase from Methanocella arvoryzae (strain DSM 22066 / NBRC 105507 / MRE50).